A 205-amino-acid chain; its full sequence is Holliday junction branch migration complex subunit RuvA (205 aa).

Residues 1-68 (MIGYLEGTLL…QPKPVLIGFN (68 aa)) form a domain I region. The tract at residues 69–146 (TEEEKDFFHL…RFADAGHSSA (78 aa)) is domain II. Positions 147–151 (PDVPV) are flexible linker. Residues 152–205 (TGSLADQTVEVLVGQLGYKPNEARLMVAGALKRNPDVSTPEALFDEIFKHGQAQ) form a domain III region.

This sequence belongs to the RuvA family. As to quaternary structure, homotetramer. Forms an RuvA(8)-RuvB(12)-Holliday junction (HJ) complex. HJ DNA is sandwiched between 2 RuvA tetramers; dsDNA enters through RuvA and exits via RuvB. An RuvB hexamer assembles on each DNA strand where it exits the tetramer. Each RuvB hexamer is contacted by two RuvA subunits (via domain III) on 2 adjacent RuvB subunits; this complex drives branch migration. In the full resolvosome a probable DNA-RuvA(4)-RuvB(12)-RuvC(2) complex forms which resolves the HJ.

It localises to the cytoplasm. Functionally, the RuvA-RuvB-RuvC complex processes Holliday junction (HJ) DNA during genetic recombination and DNA repair, while the RuvA-RuvB complex plays an important role in the rescue of blocked DNA replication forks via replication fork reversal (RFR). RuvA specifically binds to HJ cruciform DNA, conferring on it an open structure. The RuvB hexamer acts as an ATP-dependent pump, pulling dsDNA into and through the RuvAB complex. HJ branch migration allows RuvC to scan DNA until it finds its consensus sequence, where it cleaves and resolves the cruciform DNA. In Desulfosudis oleivorans (strain DSM 6200 / JCM 39069 / Hxd3) (Desulfococcus oleovorans), this protein is Holliday junction branch migration complex subunit RuvA.